A 183-amino-acid polypeptide reads, in one-letter code: U3 small nucleolar ribonucleoprotein protein IMP3 (183 aa).

The 67-residue stretch at 109-175 (RRLPVIMHRL…IKKTLLRYRN (67 aa)) folds into the S4 RNA-binding domain.

Belongs to the universal ribosomal protein uS4 family. As to quaternary structure, component of a heterotrimeric complex containing IMP3, IMP4 and MPP10. Interacts with MPP10. Component of the ribosomal small subunit (SSU) processome composed of at least 40 protein subunits and snoRNA U3.

The protein localises to the nucleus. The protein resides in the nucleolus. Required for the early cleavages at sites A0, A1 and A2 during 18S ribosomal pre-RNA processing. This chain is U3 small nucleolar ribonucleoprotein protein IMP3 (IMP3), found in Saccharomyces cerevisiae (strain ATCC 204508 / S288c) (Baker's yeast).